The sequence spans 596 residues: Probable ABC transporter ECU01_0200/ECU01_1410 (596 aa).

3 consecutive transmembrane segments (helical) span residues 26-46, 173-193, and 289-309; these read ALMA…VMSI, LVPI…MLRI, and LSVL…LGGI. In terms of domain architecture, ABC transmembrane type-1 spans 39–318; that stretch reads KWFDVMSIKR…IARDLGFWLT (280 aa). The region spanning 361 to 593 is the ABC transporter domain; sequence VEFDDVSFAY…RGMYWRMKTA (233 aa). ATP contacts are provided by residues Tyr-370 and 400–411; that span reads GRPGSGKSTILR.

Belongs to the ABC transporter superfamily. ABCB family. Heavy Metal importer (TC 3.A.1.210) subfamily.

The protein localises to the membrane. This Encephalitozoon cuniculi (strain GB-M1) (Microsporidian parasite) protein is Probable ABC transporter ECU01_0200/ECU01_1410.